A 1338-amino-acid chain; its full sequence is Insulin receptor substrate 2 (1338 aa).

The span at 1 to 12 shows a compositional bias: pro residues; it reads MASPPRHGPPGP. Disordered regions lie at residues 1–31 and 49–72; these read MASPPRHGPPGPASGDGPNLNNNNNNNNHSV and VLRGPGAGGDEATAGGGSAPQPPR. The region spanning 16-144 is the PH domain; that stretch reads DGPNLNNNNN…WYRALTDLVS (129 aa). The span at 19–28 shows a compositional bias: low complexity; it reads NLNNNNNNNN. Residues 53 to 66 are compositionally biased toward gly residues; it reads PGAGGDEATAGGGS. The IRS-type PTB domain occupies 194 to 298; it reads YREVWQVNLK…EAMKALKELF (105 aa). The tract at residues 303 to 411 is disordered; that stretch reads RSKSQSSGSS…SHTLSGGCGG (109 aa). Phosphoserine occurs at positions 306 and 346. The residue at position 350 (Thr-350) is a Phosphothreonine. Phosphoserine occurs at positions 365, 384, 388, and 391. Arg-412 bears the Omega-N-methylarginine mark. A disordered region spans residues 428–537; sequence SRSMSMPVAH…PPARDGGGGG (110 aa). A compositionally biased stretch (low complexity) spans 444-453; it reads SPGSLSSSSG. Over residues 459 to 471 the composition is skewed to pro residues; the sequence is YPPPPGPHPPLPH. Residues 475 to 493 are compositionally biased toward low complexity; the sequence is HGPGQRPSSGSASASGSPS. Residue Thr-520 is modified to Phosphothreonine. Residue Ser-523 is modified to Phosphoserine. Thr-527 carries the post-translational modification Phosphothreonine. Tyr-540 carries the post-translational modification Phosphotyrosine; by INSR. Positions 540–543 match the YXXM motif 1 motif; the sequence is YGYM. A Phosphoserine; by PLK1 modification is found at Ser-560. Ser-577 is subject to Phosphoserine. 2 positions are modified to phosphothreonine: Thr-579 and Thr-580. Ser-594 is modified (phosphoserine). The YXXM motif 2 signature appears at 598-601; that stretch reads YTLM. Residues Ser-608 and Ser-620 each carry the phosphoserine modification. 2 positions are modified to phosphotyrosine; by INSR: Tyr-653 and Tyr-675. Short sequence motifs (YXXM motif) lie at residues 653-656 and 675-678; these read YMPM. Residues Ser-679 and Ser-682 each carry the phosphoserine modification. The span at 703-719 shows a compositional bias: low complexity; it reads PSAGPAGPAPTSAAGRT. Residues 703–739 form a disordered region; that stretch reads PSAGPAGPAPTSAAGRTFPASGGGYKASSPAESSPED. Phosphoserine is present on residues Ser-735 and Ser-736. The YXXM motif 5 motif lies at 742–745; that stretch reads YMRM. At Ser-770 the chain carries Phosphoserine. The residue at position 779 (Thr-779) is a Phosphothreonine. At Ser-805 the chain carries Phosphoserine. The YXXM motif 6 signature appears at 823–826; it reads YVLM. Ser-828 is modified (phosphoserine). The tract at residues 840 to 1101 is disordered; it reads EPQATPGPSQ…KPEAARVASP (262 aa). Over residues 859–870 the composition is skewed to pro residues; that stretch reads TQPPHPVVPSPV. Ser-915 bears the Phosphoserine mark. Tyr-919 is modified (phosphotyrosine; by INSR). A compositionally biased stretch (low complexity) spans 938-967; sequence LLASAASSSSLLSASSPASSLGSGTPGTSS. At Ser-973 the chain carries Phosphoserine. Residue Tyr-978 is modified to Phosphotyrosine; by INSR. Over residues 1013 to 1022 the composition is skewed to pro residues; that stretch reads PYPPLPPRPS. The YXXM motif 7 motif lies at 1072-1075; sequence YTEM. Thr-1082 is subject to Phosphothreonine. The segment covering 1083-1093 has biased composition (pro residues); it reads PPQPIAAPPKP. At Ser-1100 the chain carries Phosphoserine. A Phosphoserine; by PLK1 modification is found at Ser-1109. The segment at 1121–1296 is disordered; sequence LQASQPPDPH…TRSLGGLISA (176 aa). A compositionally biased stretch (low complexity) spans 1150–1165; that stretch reads ETFSSTTTVTPVSPSF. The residue at position 1159 (Thr-1159) is a Phosphothreonine. Residues Ser-1162, Ser-1174, Ser-1176, and Ser-1186 each carry the phosphoserine modification. Residues 1174–1183 are compositionally biased toward polar residues; the sequence is SASVENVSLR. Positions 1188–1198 are enriched in gly residues; sequence GGVGVGPGGGD. Phosphoserine is present on Ser-1203. Gly residues predominate over residues 1224–1236; that stretch reads QPGGLVGCPGSGG. Tyr-1253 carries the phosphotyrosine; by INSR modification. The segment covering 1263–1277 has biased composition (pro residues); that stretch reads GLPPQPQPPPPPLPQ. Lys-1331 participates in a covalent cross-link: Glycyl lysine isopeptide (Lys-Gly) (interchain with G-Cter in ubiquitin).

In terms of assembly, interacts with PHIP. Interacts with SH2B1; this interaction enhances leptin-induced activation of the PI3-kinase pathway. Interacts with GRB2. Interacts with PIK3R1. Interacts with DVL2; this interaction promotes the Wnt/beta-catenin signaling pathway. In terms of processing, phosphorylation fluctuates in a cell-cycle dependent manner with hyperphosphorylation during mitosis. Phosphorylated at Ser-560 and Ser-1109 by PLK1; these phosphorylations prevent the activation of the PI3K pathway upon growth factor stimulation by inhibiting the binding between IRS2 and the PI3K pathway components and increasing the level of IRS2 protein degradation. In addition, they prevent premature mitotic exit. Monoubiquitinated by NEDD4; leading to enhanced IGF1 signaling. During cell cycle, ubiquitination and proteasomal degradation are controlled by FZR1.

It localises to the cytoplasm. The protein resides in the cytosol. Signaling adapter protein that participates in the signal transduction from two prominent receptor tyrosine kinases, insulin receptor/INSR and insulin-like growth factor I receptor/IGF1R. Plays therefore an important role in development, growth, glucose homeostasis as well as lipid metabolism. Upon phosphorylation by the insulin receptor, functions as a signaling scaffold that propagates insulin action through binding to SH2 domain-containing proteins including the p85 regulatory subunit of PI3K, NCK1, NCK2, GRB2 or SHP2. Recruitment of GRB2 leads to the activation of the guanine nucleotide exchange factor SOS1 which in turn triggers the Ras/Raf/MEK/MAPK signaling cascade. Activation of the PI3K/AKT pathway is responsible for most of insulin metabolic effects in the cell, and the Ras/Raf/MEK/MAPK is involved in the regulation of gene expression and in cooperation with the PI3K pathway regulates cell growth and differentiation. Acts a positive regulator of the Wnt/beta-catenin signaling pathway through suppression of DVL2 autophagy-mediated degradation leading to cell proliferation. Plays a role in cell cycle progression by promoting a robust spindle assembly checkpoint (SAC) during M-phase. In macrophages, IL4-induced tyrosine phosphorylation of IRS2 leads to the recruitment and activation of phosphoinositide 3-kinase (PI3K). This is Insulin receptor substrate 2 (IRS2) from Homo sapiens (Human).